A 301-amino-acid polypeptide reads, in one-letter code: Pyridoxal 5'-phosphate synthase subunit Pdx1 (301 aa).

Asp-26 serves as a coordination point for D-ribose 5-phosphate. Lys-83 (schiff-base intermediate with D-ribose 5-phosphate) is an active-site residue. Position 155 (Gly-155) interacts with D-ribose 5-phosphate. Residue Arg-167 coordinates D-glyceraldehyde 3-phosphate. Residues Gly-216 and 237–238 (GS) contribute to the D-ribose 5-phosphate site.

Belongs to the PdxS/SNZ family. In terms of assembly, homohexamer and homododecamer. In the presence of Pdx2, forms a dodecamer of heterodimers.

The protein resides in the cytoplasm. The catalysed reaction is aldehydo-D-ribose 5-phosphate + D-glyceraldehyde 3-phosphate + L-glutamine = pyridoxal 5'-phosphate + L-glutamate + phosphate + 3 H2O + H(+). The protein operates within cofactor biosynthesis; pyridoxal 5'-phosphate biosynthesis. Functionally, catalyzes the formation of pyridoxal 5'-phosphate from ribose 5-phosphate (RBP), glyceraldehyde 3-phosphate (G3P) and ammonia. The ammonia is provided by Pdx2. Can also use ribulose 5-phosphate and dihydroxyacetone phosphate as substrates, resulting from enzyme-catalyzed isomerization of RBP and G3P, respectively. This Plasmodium falciparum (isolate 3D7) protein is Pyridoxal 5'-phosphate synthase subunit Pdx1 (pdx1).